Reading from the N-terminus, the 543-residue chain is Chaperonin GroEL 1 (543 aa).

ATP contacts are provided by residues 30-33 (TLGP), Lys-51, 87-91 (DGTTT), Gly-415, and Asp-496.

The protein belongs to the chaperonin (HSP60) family. Forms a cylinder of 14 subunits composed of two heptameric rings stacked back-to-back. Interacts with the co-chaperonin GroES.

The protein resides in the cytoplasm. The catalysed reaction is ATP + H2O + a folded polypeptide = ADP + phosphate + an unfolded polypeptide.. Together with its co-chaperonin GroES, plays an essential role in assisting protein folding. The GroEL-GroES system forms a nano-cage that allows encapsulation of the non-native substrate proteins and provides a physical environment optimized to promote and accelerate protein folding. The polypeptide is Chaperonin GroEL 1 (Roseobacter denitrificans (strain ATCC 33942 / OCh 114) (Erythrobacter sp. (strain OCh 114))).